We begin with the raw amino-acid sequence, 629 residues long: tRNA uridine 5-carboxymethylaminomethyl modification enzyme MnmG (629 aa).

Residues Gly13–Gly18, Val125, and Ser180 each bind FAD. Gly273–Phe287 contacts NAD(+). Residue Gln370 coordinates FAD.

This sequence belongs to the MnmG family. In terms of assembly, homodimer. Heterotetramer of two MnmE and two MnmG subunits. FAD serves as cofactor.

It localises to the cytoplasm. Its function is as follows. NAD-binding protein involved in the addition of a carboxymethylaminomethyl (cmnm) group at the wobble position (U34) of certain tRNAs, forming tRNA-cmnm(5)s(2)U34. The sequence is that of tRNA uridine 5-carboxymethylaminomethyl modification enzyme MnmG from Shewanella oneidensis (strain ATCC 700550 / JCM 31522 / CIP 106686 / LMG 19005 / NCIMB 14063 / MR-1).